Reading from the N-terminus, the 134-residue chain is Small ribosomal subunit protein uS8c (134 aa).

It belongs to the universal ribosomal protein uS8 family. In terms of assembly, part of the 30S ribosomal subunit.

The protein resides in the plastid. It localises to the chloroplast. In terms of biological role, one of the primary rRNA binding proteins, it binds directly to 16S rRNA central domain where it helps coordinate assembly of the platform of the 30S subunit. The polypeptide is Small ribosomal subunit protein uS8c (rps8) (Phaseolus vulgaris (Kidney bean)).